Consider the following 286-residue polypeptide: Glycine--tRNA ligase alpha subunit (286 aa).

It belongs to the class-II aminoacyl-tRNA synthetase family. In terms of assembly, tetramer of two alpha and two beta subunits.

The protein resides in the cytoplasm. The catalysed reaction is tRNA(Gly) + glycine + ATP = glycyl-tRNA(Gly) + AMP + diphosphate. This chain is Glycine--tRNA ligase alpha subunit, found in Campylobacter lari (strain RM2100 / D67 / ATCC BAA-1060).